The following is a 60-amino-acid chain: uncharacterized protein (60 aa).

The helical transmembrane segment at 11-33 (VFTVGFITGGVTPVMVSFVWPAA) threads the bilayer. 2 N-linked (GlcNAc...) asparagine; by host glycosylation sites follow: N40 and N57.

It is found in the host membrane. This is an uncharacterized protein from African swine fever virus (strain Badajoz 1971 Vero-adapted) (Ba71V).